We begin with the raw amino-acid sequence, 222 residues long: ER membrane protein complex subunit 7 homolog (222 aa).

Positions 1–16 (MKSILLLFSLIVLGSA) are cleaved as a signal peptide. The Extracellular portion of the chain corresponds to 17 to 145 (TEEVSRTEQT…RKREEWRITD (129 aa)). Residues 146–166 (MLFSPMVLMLVVPLVVMLILP) traverse the membrane as a helical segment. Residues 167–222 (KMTANDPELKKEMENMQMPKVDMPDVGEMMANFFGGSAPAKKKAVTGGSGSGQRRK) are Cytoplasmic-facing.

Belongs to the EMC7 family.

It localises to the membrane. The sequence is that of ER membrane protein complex subunit 7 homolog from Caenorhabditis elegans.